The chain runs to 146 residues: Flavodoxin (146 aa).

In terms of domain architecture, Flavodoxin-like spans 4–143; sequence ALIVYGSTTG…EVLDWAREVL (140 aa).

This sequence belongs to the flavodoxin family. FMN is required as a cofactor.

In terms of biological role, electron-transfer proteins that function in various electron transport systems in microorganisms. Functionally interchangeable with ferredoxin. This chain is Flavodoxin, found in Megalodesulfovibrio gigas (strain ATCC 19364 / DSM 1382 / NCIMB 9332 / VKM B-1759) (Desulfovibrio gigas).